The primary structure comprises 285 residues: Taffazin (285 aa).

The Mitochondrial intermembrane portion of the chain corresponds to 1–23 (MDSNNSNNNNKNLKQICDIPKPQ). Residues 24-42 (FLSKGVFTLVGVLCKFWIS) lie within the membrane without spanning it. Over 43–285 (MNTVTTSGID…GRFSHPTIKD (243 aa)) the chain is Mitochondrial intermembrane. Positions 74–79 (HSSNLD) match the HXXXXD motif motif.

This sequence belongs to the taffazin family.

It localises to the mitochondrion outer membrane. It is found in the mitochondrion inner membrane. The catalysed reaction is a 1-acyl-sn-glycero-3-phosphate + a 1,2-diacyl-sn-glycero-3-phospho-(1'-sn-glycerol) = 1-acyl-sn-glycero-3-phospho-(1'-sn-glycerol) + a 1,2-diacyl-sn-glycero-3-phosphate. It catalyses the reaction 1-hexadecanoyl-2-(9Z,12Z-octadecadienoyl)-sn-glycero-3-phospho-(1'-sn-glycerol) + 1-(9Z-octadecenoyl)-sn-glycero-3-phosphate = 1-(9Z)-octadecenoyl-2-(9Z,12Z)-octadecadienoyl-sn-glycero-3-phosphate + 1-hexadecanoyl-sn-glycero-3-phospho-(1'-sn-glycerol). It carries out the reaction 1'-[1,2-diacyl-sn-glycero-3-phospho],3'-[1-acyl-sn-glycero-3-phospho]-glycerol + a 1,2-diacyl-sn-glycero-3-phosphocholine = a cardiolipin + a 1-acyl-sn-glycero-3-phosphocholine. The enzyme catalyses 1-hexadecanoyl-2-(9Z,12Z-octadecadienoyl)-sn-glycero-3-phosphocholine + 1-hexadecanoyl-sn-glycero-3-phosphocholine = 2-(9Z,12Z-octadecadienoyl)-sn-glycero-3-phosphocholine + 1,2-dihexadecanoyl-sn-glycero-3-phosphocholine. The catalysed reaction is 1,2-di-(9Z-octadecenoyl)-sn-glycero-3-phosphocholine + 1-hexadecanoyl-sn-glycero-3-phosphocholine = 1-hexadecanoyl-2-(9Z-octadecenoyl)-sn-glycero-3-phosphocholine + 1-(9Z-octadecenoyl)-sn-glycero-3-phosphocholine. It functions in the pathway phospholipid metabolism. Acyltransferase required to remodel newly synthesized phospholipid cardiolipin (1',3'-bis-[1,2-diacyl-sn-glycero-3-phospho]-glycerol or CL), a key component of the mitochondrial inner membrane, with tissue specific acyl chains necessary for adequate mitochondrial function. Its role in cellular physiology is to improve mitochondrial performance. CL is critical for the coassembly of lipids and proteins in mitochondrial membranes, for instance, remodeling of the acyl groups of CL in the mitochondrial inner membrane affects the assembly and stability of respiratory chain complex IV and its supercomplex forms. Catalyzes the transacylation between phospholipids and lysophospholipids, with the highest rate being between phosphatidylcholine (1,2-diacyl-sn-glycero-3-phosphocholine or PC) and CL. Catalyzes both 1-acyl-sn-glycero-3-phosphocholine (lysophosphatidylcholine or LPC) reacylation and PC-CL transacylation, that means, it exchanges acyl groups between CL and PC by a combination of forward and reverse transacylations. Also catalyzes transacylations between other phospholipids such as phosphatidylethanolamine (1,2-diacyl-sn-glycero-3-phosphoethanolamine or PE) and CL, between PC and PE, and between PC and phosphatidate (1,2-diacyl-sn-glycero-3-phosphate or PA), although at lower rate. Not regiospecific, it transfers acyl groups into any of the sn-1 and sn-2 positions of the monolysocardiolipin (MLCL), which is an important prerequisite for uniformity and symmetry in CL acyl distribution. Cannot transacylate dilysocardiolipin (DLCL), thus, the role of MLCL is limited to that of an acyl acceptor. CoA-independent, it can reshuffle molecular species within a single phospholipid class. Redistributes fatty acids between MLCL, CL, and other lipids, which prolongs the half-life of CL. Its action is completely reversible, which allows for cyclic changes, such as fission and fusion or bending and flattening of the membrane. Hence, by contributing to the flexibility of the lipid composition, it plays an important role in the dynamics of mitochondria membranes. The sequence is that of Taffazin (taz) from Dictyostelium discoideum (Social amoeba).